Consider the following 425-residue polypeptide: Serine--tRNA ligase (425 aa).

Residue 227-229 (TAE) participates in L-serine binding. Residues 258-260 (RRE) and valine 274 contribute to the ATP site. Residue glutamate 281 coordinates L-serine. Residue 347 to 350 (ETHS) participates in ATP binding. L-serine is bound at residue threonine 382.

It belongs to the class-II aminoacyl-tRNA synthetase family. Type-1 seryl-tRNA synthetase subfamily. As to quaternary structure, homodimer. The tRNA molecule binds across the dimer.

The protein resides in the cytoplasm. The enzyme catalyses tRNA(Ser) + L-serine + ATP = L-seryl-tRNA(Ser) + AMP + diphosphate + H(+). It carries out the reaction tRNA(Sec) + L-serine + ATP = L-seryl-tRNA(Sec) + AMP + diphosphate + H(+). It functions in the pathway aminoacyl-tRNA biosynthesis; selenocysteinyl-tRNA(Sec) biosynthesis; L-seryl-tRNA(Sec) from L-serine and tRNA(Sec): step 1/1. Functionally, catalyzes the attachment of serine to tRNA(Ser). Is also able to aminoacylate tRNA(Sec) with serine, to form the misacylated tRNA L-seryl-tRNA(Sec), which will be further converted into selenocysteinyl-tRNA(Sec). In Deinococcus radiodurans (strain ATCC 13939 / DSM 20539 / JCM 16871 / CCUG 27074 / LMG 4051 / NBRC 15346 / NCIMB 9279 / VKM B-1422 / R1), this protein is Serine--tRNA ligase.